A 102-amino-acid chain; its full sequence is MAGQRIRVKLKAFDHRLIDQSTFEIVATAKRTGATVSGPIPLPTKKEIYTVLRSPHVNKKAREQFEMRTHKRLIDILNTNEDTVEALMKLQLPAGVSVDIKS.

It belongs to the universal ribosomal protein uS10 family. Part of the 30S ribosomal subunit.

In terms of biological role, involved in the binding of tRNA to the ribosomes. This Leptospira biflexa serovar Patoc (strain Patoc 1 / Ames) protein is Small ribosomal subunit protein uS10.